We begin with the raw amino-acid sequence, 206 residues long: Small ribosomal subunit protein eS1 (206 aa).

It belongs to the eukaryotic ribosomal protein eS1 family.

The sequence is that of Small ribosomal subunit protein eS1 from Methanocorpusculum labreanum (strain ATCC 43576 / DSM 4855 / Z).